A 309-amino-acid chain; its full sequence is Ribonuclease Z (309 aa).

Zn(2+) is bound by residues His-63, His-65, Asp-67, His-68, His-145, Asp-216, and His-274. Asp-67 (proton acceptor) is an active-site residue.

This sequence belongs to the RNase Z family. In terms of assembly, homodimer. Requires Zn(2+) as cofactor.

The enzyme catalyses Endonucleolytic cleavage of RNA, removing extra 3' nucleotides from tRNA precursor, generating 3' termini of tRNAs. A 3'-hydroxy group is left at the tRNA terminus and a 5'-phosphoryl group is left at the trailer molecule.. Zinc phosphodiesterase, which displays some tRNA 3'-processing endonuclease activity. Probably involved in tRNA maturation, by removing a 3'-trailer from precursor tRNA. In Streptococcus equi subsp. equi (strain 4047), this protein is Ribonuclease Z.